A 91-amino-acid polypeptide reads, in one-letter code: Non-specific lipid-transfer protein P5 (91 aa).

4 disulfide bridges follow: cysteine 3-cysteine 50, cysteine 13-cysteine 27, cysteine 28-cysteine 73, and cysteine 48-cysteine 87.

The protein localises to the secreted. Plant non-specific lipid-transfer proteins transfer phospholipids as well as galactolipids across membranes. May play a role in wax or cutin deposition in the cell walls of expanding epidermal cells and certain secretory tissues. This Vitis sp. (Grape) protein is Non-specific lipid-transfer protein P5.